We begin with the raw amino-acid sequence, 470 residues long: 1-aminocyclopropane-1-carboxylate synthase 5 (470 aa).

Positions 47 and 85 each coordinate substrate. Position 272 is an N6-(pyridoxal phosphate)lysine (K272). Position 461 is a phosphoserine (S461).

Belongs to the class-I pyridoxal-phosphate-dependent aminotransferase family. As to quaternary structure, homodimer and heterodimer. In vivo, the relevance of heterodimerization with other ACS enzymes is however unsure. Interacts (via its C-terminal region) with FEI1, FEI2, ETO1, EOL1 and EOL2. Interacts with GRF3. Pyridoxal 5'-phosphate is required as a cofactor. May be processed at its C-terminus. Post-translationally, ubiquitinated. The interaction with ETO1 (and possibly EOL1 and EOL2) mediate its proteasome-dependent degradation. Its stability and degradation plays a central role in ethylene biosynthesis. Expressed in roots and siliques.

The catalysed reaction is S-adenosyl-L-methionine = 1-aminocyclopropane-1-carboxylate + S-methyl-5'-thioadenosine + H(+). It functions in the pathway alkene biosynthesis; ethylene biosynthesis via S-adenosyl-L-methionine; ethylene from S-adenosyl-L-methionine: step 1/2. Its function is as follows. 1-aminocyclopropane-1-carboxylate synthase (ACS) enzymes catalyze the conversion of S-adenosyl-L-methionine (SAM) into 1-aminocyclopropane-1-carboxylate (ACC), a direct precursor of ethylene. This Arabidopsis thaliana (Mouse-ear cress) protein is 1-aminocyclopropane-1-carboxylate synthase 5 (ACS5).